Here is a 190-residue protein sequence, read N- to C-terminus: Segregation and condensation protein B (190 aa).

It belongs to the ScpB family. Homodimer. Homodimerization may be required to stabilize the binding of ScpA to the Smc head domains. Component of a cohesin-like complex composed of ScpA, ScpB and the Smc homodimer, in which ScpA and ScpB bind to the head domain of Smc. The presence of the three proteins is required for the association of the complex with DNA.

It is found in the cytoplasm. Its function is as follows. Participates in chromosomal partition during cell division. May act via the formation of a condensin-like complex containing Smc and ScpA that pull DNA away from mid-cell into both cell halves. This chain is Segregation and condensation protein B, found in Bacillus mycoides (strain KBAB4) (Bacillus weihenstephanensis).